The chain runs to 679 residues: Pollen receptor-like kinase 4 (679 aa).

The first 39 residues, methionine 1–serine 39, serve as a signal peptide directing secretion. LRR repeat units follow at residues isoleucine 118–phenylalanine 141, glycine 142–glycine 165, histidine 167–proline 191, leucine 193–leucine 217, and serine 234–serine 257. Over residues leucine 252 to proline 269 the composition is skewed to low complexity. The disordered stretch occupies residues leucine 252 to glutamate 271. A helical transmembrane segment spans residues phenylalanine 278–valine 298. Positions serine 311–serine 344 are disordered. A compositionally biased stretch (basic and acidic residues) spans aspartate 319–alanine 336. The Protein kinase domain occupies arginine 372–leucine 646. Serine 374 is modified (phosphoserine). ATP contacts are provided by residues leucine 378–serine 386 and lysine 400. Phosphoserine is present on residues serine 452 and serine 455. Threonine 472 bears the Phosphothreonine mark. Phosphotyrosine is present on tyrosine 542.

The protein belongs to the protein kinase superfamily. Ser/Thr protein kinase family. As to quaternary structure, interacts in vitro with ROPGEF1 (via PRONE domain). Interacts weakly with the GRI peptide. In terms of tissue distribution, expressed in pollen and/or in flowers, but not in leaves.

The protein localises to the membrane. It carries out the reaction L-seryl-[protein] + ATP = O-phospho-L-seryl-[protein] + ADP + H(+). It catalyses the reaction L-threonyl-[protein] + ATP = O-phospho-L-threonyl-[protein] + ADP + H(+). In terms of biological role, receptor-like kinase involved in the control of pollen germination and pollen tube polar growth. Can phosphorylate ROPGEF1 in vitro. The polypeptide is Pollen receptor-like kinase 4 (Arabidopsis thaliana (Mouse-ear cress)).